The sequence spans 323 residues: Ribonuclease Z (323 aa).

7 residues coordinate Zn(2+): H62, H64, D66, H67, H140, D211, and H270. D66 serves as the catalytic Proton acceptor.

Belongs to the RNase Z family. Homodimer. It depends on Zn(2+) as a cofactor.

It carries out the reaction Endonucleolytic cleavage of RNA, removing extra 3' nucleotides from tRNA precursor, generating 3' termini of tRNAs. A 3'-hydroxy group is left at the tRNA terminus and a 5'-phosphoryl group is left at the trailer molecule.. Its function is as follows. Zinc phosphodiesterase, which displays some tRNA 3'-processing endonuclease activity. Probably involved in tRNA maturation, by removing a 3'-trailer from precursor tRNA. This is Ribonuclease Z from Marinobacter nauticus (strain ATCC 700491 / DSM 11845 / VT8) (Marinobacter aquaeolei).